The sequence spans 466 residues: uncharacterized protein (466 aa).

An Autotransporter domain is found at 178–466 (SQGSASSMWM…QGMLGVKYSW (289 aa)).

This is an uncharacterized protein from Escherichia coli (strain K12).